The primary structure comprises 194 residues: Peptidyl-tRNA hydrolase (194 aa).

Residue Y17 participates in tRNA binding. The Proton acceptor role is filled by H22. TRNA is bound by residues Y68, N70, and N116.

This sequence belongs to the PTH family. Monomer.

The protein resides in the cytoplasm. The catalysed reaction is an N-acyl-L-alpha-aminoacyl-tRNA + H2O = an N-acyl-L-amino acid + a tRNA + H(+). In terms of biological role, hydrolyzes ribosome-free peptidyl-tRNAs (with 1 or more amino acids incorporated), which drop off the ribosome during protein synthesis, or as a result of ribosome stalling. Catalyzes the release of premature peptidyl moieties from peptidyl-tRNA molecules trapped in stalled 50S ribosomal subunits, and thus maintains levels of free tRNAs and 50S ribosomes. The polypeptide is Peptidyl-tRNA hydrolase (Marinomonas sp. (strain MWYL1)).